A 465-amino-acid chain; its full sequence is Ribulose bisphosphate carboxylase large chain (465 aa).

Lysine 4 carries the N6,N6,N6-trimethyllysine modification. Positions 113 and 163 each coordinate substrate. Lysine 165 acts as the Proton acceptor in catalysis. Lysine 167 contributes to the substrate binding site. Positions 191, 193, and 194 each coordinate Mg(2+). Lysine 191 carries the N6-carboxylysine modification. Catalysis depends on histidine 284, which acts as the Proton acceptor. The substrate site is built by arginine 285, histidine 317, and serine 369.

The protein belongs to the RuBisCO large chain family. Type I subfamily. In terms of assembly, heterohexadecamer of 8 large chains and 8 small chains; disulfide-linked. The disulfide link is formed within the large subunit homodimers. The cofactor is Mg(2+). The disulfide bond which can form in the large chain dimeric partners within the hexadecamer appears to be associated with oxidative stress and protein turnover.

It is found in the plastid. Its subcellular location is the chloroplast. The catalysed reaction is 2 (2R)-3-phosphoglycerate + 2 H(+) = D-ribulose 1,5-bisphosphate + CO2 + H2O. The enzyme catalyses D-ribulose 1,5-bisphosphate + O2 = 2-phosphoglycolate + (2R)-3-phosphoglycerate + 2 H(+). Functionally, ruBisCO catalyzes two reactions: the carboxylation of D-ribulose 1,5-bisphosphate, the primary event in carbon dioxide fixation, as well as the oxidative fragmentation of the pentose substrate in the photorespiration process. Both reactions occur simultaneously and in competition at the same active site. This chain is Ribulose bisphosphate carboxylase large chain, found in Cornus canadensis (Bunchberry dogwood).